The sequence spans 162 residues: Phosphopantetheine adenylyltransferase (162 aa).

T10 provides a ligand contact to substrate. ATP-binding positions include 10–11 and H18; that span reads TF. Positions 42, 74, and 88 each coordinate substrate. ATP is bound by residues 89-91, E99, and 124-130; these read GLR and FSCISST.

The protein belongs to the bacterial CoaD family. As to quaternary structure, homohexamer. Mg(2+) serves as cofactor.

The protein localises to the cytoplasm. It catalyses the reaction (R)-4'-phosphopantetheine + ATP + H(+) = 3'-dephospho-CoA + diphosphate. It functions in the pathway cofactor biosynthesis; coenzyme A biosynthesis; CoA from (R)-pantothenate: step 4/5. Reversibly transfers an adenylyl group from ATP to 4'-phosphopantetheine, yielding dephospho-CoA (dPCoA) and pyrophosphate. This chain is Phosphopantetheine adenylyltransferase, found in Francisella tularensis subsp. mediasiatica (strain FSC147).